Consider the following 177-residue polypeptide: ATP synthase subunit delta (177 aa).

The protein belongs to the ATPase delta chain family. As to quaternary structure, F-type ATPases have 2 components, F(1) - the catalytic core - and F(0) - the membrane proton channel. F(1) has five subunits: alpha(3), beta(3), gamma(1), delta(1), epsilon(1). F(0) has three main subunits: a(1), b(2) and c(10-14). The alpha and beta chains form an alternating ring which encloses part of the gamma chain. F(1) is attached to F(0) by a central stalk formed by the gamma and epsilon chains, while a peripheral stalk is formed by the delta and b chains.

The protein localises to the cell inner membrane. Its function is as follows. F(1)F(0) ATP synthase produces ATP from ADP in the presence of a proton or sodium gradient. F-type ATPases consist of two structural domains, F(1) containing the extramembraneous catalytic core and F(0) containing the membrane proton channel, linked together by a central stalk and a peripheral stalk. During catalysis, ATP synthesis in the catalytic domain of F(1) is coupled via a rotary mechanism of the central stalk subunits to proton translocation. Functionally, this protein is part of the stalk that links CF(0) to CF(1). It either transmits conformational changes from CF(0) to CF(1) or is implicated in proton conduction. This is ATP synthase subunit delta from Shewanella sediminis (strain HAW-EB3).